The primary structure comprises 94 residues: uncharacterized protein (94 aa).

This is an uncharacterized protein from Homo sapiens (Human).